A 430-amino-acid polypeptide reads, in one-letter code: Glutamate-1-semialdehyde 2,1-aminomutase (430 aa).

Lysine 268 is subject to N6-(pyridoxal phosphate)lysine.

The protein belongs to the class-III pyridoxal-phosphate-dependent aminotransferase family. HemL subfamily. In terms of assembly, homodimer. Pyridoxal 5'-phosphate is required as a cofactor.

The protein localises to the cytoplasm. It catalyses the reaction (S)-4-amino-5-oxopentanoate = 5-aminolevulinate. It functions in the pathway porphyrin-containing compound metabolism; protoporphyrin-IX biosynthesis; 5-aminolevulinate from L-glutamyl-tRNA(Glu): step 2/2. This chain is Glutamate-1-semialdehyde 2,1-aminomutase (hemL), found in Bacillus subtilis (strain 168).